The sequence spans 490 residues: Cobyric acid synthase (490 aa).

One can recognise a GATase cobBQ-type domain in the interval 251-444 (GLTIAVIHLP…LHGIFANDAF (194 aa)). Cys329 (nucleophile) is an active-site residue. His436 is a catalytic residue.

Belongs to the CobB/CobQ family. CobQ subfamily.

It participates in cofactor biosynthesis; adenosylcobalamin biosynthesis. Functionally, catalyzes amidations at positions B, D, E, and G on adenosylcobyrinic A,C-diamide. NH(2) groups are provided by glutamine, and one molecule of ATP is hydrogenolyzed for each amidation. In Roseiflexus castenholzii (strain DSM 13941 / HLO8), this protein is Cobyric acid synthase.